A 659-amino-acid chain; its full sequence is MPGSANWTADRFYIPDTLANWPWPRAINPAYEECKAASAAWCEKYGAFSARAQKAFNLCDFNLLASLAYAGLPADVNRVGCDLMNLFFVVDEHTDAMDARSVQDWVDIVVDALHHPHTPRPAGEPKVGEIARTFWENGIKCMGPTAQRRFVETFTTYLQSVVTQAQDRDKHLFRDVDSYMEVRRDTIGAKPSFALLEHDMELPDDVFYHPLLEKLREWAIDMLILGNDLCSYNVEQSRGDDGHNIIRLAMLQENTNVHGALRFVSKMHDDLAEKFLSNYQGMPSFTPQIDAWVTRYIDGLGNWVRANDSWSFESWRYFKGDVLRVQAERWVELLPPAPKDELTSSIPPESRWIKPAVEPSRARPNNVGIVALDTYTPTSEDDFQTLAVKTVSSLLSKYNINPVSVGRLDICIERAADPYIIYALRDAFASAGNTDVEAIVSSSKSVVGLFNAINWVESSSWDGRYAIVFAGDLSSGVSAALVGPDAPIVVEPTRGTYLGDPIASTDEAQGSYIDSLFQSYSHYRKKHPQFSKTSGAPNGAHTPTTTNGSIKSNGFVSGDTNGHANGNGHVQTRSSTPSSSSSSTSSPSFDYMILHDRHGKIPTGAGSIYLGLASLITDIAPETLAGKSIGVFGFANSTSTFFGIRVAGDCSVICKQLQA.

The Mg(2+) site is built by aspartate 91, asparagine 227, serine 231, and glutamate 235. A DDXXD motif motif is present at residues 91 to 95 (DEHTD). Positions 316 and 317 each coordinate (2E,6E)-farnesyl diphosphate. Positions 528–586 (PQFSKTSGAPNGAHTPTTTNGSIKSNGFVSGDTNGHANGNGHVQTRSSTPSSSSSSTSS) are disordered. Residues 530–573 (FSKTSGAPNGAHTPTTTNGSIKSNGFVSGDTNGHANGNGHVQTR) are compositionally biased toward polar residues. Residues 574 to 586 (SSTPSSSSSSTSS) are compositionally biased toward low complexity.

This sequence belongs to the terpene synthase family. Mg(2+) is required as a cofactor.

The catalysed reaction is (2E,6E)-farnesyl diphosphate = Delta(6)-protoilludene + diphosphate. In terms of biological role, terpene cyclase that catalyzes the cyclization of farnesyl diphosphate (FPP) to delta(6)-protoilludene. The protein is Delta(6)-protoilludene synthase of Cyclocybe aegerita (Black poplar mushroom).